We begin with the raw amino-acid sequence, 917 residues long: Spermatogenesis-associated protein 31D3 (917 aa).

Residues 29-49 (FICLSGLGLFILYLFYMVLTL) traverse the membrane as a helical segment. Disordered regions lie at residues 55–80 (EKNN…KDRK), 152–195 (SVSP…PPPL), and 773–797 (SQET…LRSN). Positions 63-74 (HQGRARRKRKSV) are enriched in basic residues. A compositionally biased stretch (low complexity) spans 152-163 (SVSPLASSASGA). Residues 164-177 (ESSFTLASTPSATT) are compositionally biased toward polar residues. A compositionally biased stretch (basic and acidic residues) spans 782–797 (LLHDPETSSEEDLRSN).

Belongs to the SPATA31 family.

Its subcellular location is the membrane. In terms of biological role, may play a role in spermatogenesis. The chain is Spermatogenesis-associated protein 31D3 (SPATA31D3) from Homo sapiens (Human).